The chain runs to 269 residues: 5'-nucleotidase SurE (269 aa).

The a divalent metal cation site is built by Asp-11, Asp-12, Ser-43, and Asn-101.

Belongs to the SurE nucleotidase family. A divalent metal cation serves as cofactor.

The protein localises to the cytoplasm. It carries out the reaction a ribonucleoside 5'-phosphate + H2O = a ribonucleoside + phosphate. In terms of biological role, nucleotidase that shows phosphatase activity on nucleoside 5'-monophosphates. This is 5'-nucleotidase SurE from Prochlorococcus marinus (strain MIT 9211).